The primary structure comprises 58 residues: Large ribosomal subunit protein uL30 (58 aa).

It belongs to the universal ribosomal protein uL30 family. In terms of assembly, part of the 50S ribosomal subunit.

The sequence is that of Large ribosomal subunit protein uL30 from Pseudomonas putida (strain W619).